Here is a 261-residue protein sequence, read N- to C-terminus: Phosphate import ATP-binding protein PstB (261 aa).

An ABC transporter domain is found at 15 to 256; that stretch reads LQVRRLNFYY…PAHQETENYI (242 aa). 47–54 serves as a coordination point for ATP; the sequence is GPSGCGKS.

The protein belongs to the ABC transporter superfamily. Phosphate importer (TC 3.A.1.7) family. As to quaternary structure, the complex is composed of two ATP-binding proteins (PstB), two transmembrane proteins (PstC and PstA) and a solute-binding protein (PstS).

It localises to the cell inner membrane. It catalyses the reaction phosphate(out) + ATP + H2O = ADP + 2 phosphate(in) + H(+). Its function is as follows. Part of the ABC transporter complex PstSACB involved in phosphate import. Responsible for energy coupling to the transport system. The polypeptide is Phosphate import ATP-binding protein PstB (Burkholderia sp).